A 192-amino-acid polypeptide reads, in one-letter code: UPF0312 protein ECA1782 (192 aa).

The signal sequence occupies residues 1 to 23 (MLKKTLLSLTAVSMLASAGSALA).

The protein belongs to the UPF0312 family. Type 1 subfamily.

The protein localises to the periplasm. The sequence is that of UPF0312 protein ECA1782 from Pectobacterium atrosepticum (strain SCRI 1043 / ATCC BAA-672) (Erwinia carotovora subsp. atroseptica).